The primary structure comprises 792 residues: MKYNQYAYVETSPEKATEELLAINFLPENYSSLSFSELLAVLTGNVLAEATTRQAKDAKLAEFAVDDQTDLAAFLLDTPTAITASQFANVALQLLGYHPNYDYSLTDPLTCGEKHALPAFKDLTSKEELIFAFYRLLNTRSKNGQILLDVMAGKGYFTQFWGEGKFMLFNGKSLPVFDTSQVIREVVYVQSDLDTDGDGKGDLLPVTVFRPVESQDQLKVPALYTASPYFGGIIDNVKTNHNVDENLTDATTWTNPKYVAKPLVKSPAPSGQDVPATELATGQSSYGLNEYLLARGFASVFSGAIGNRHGDGIRITGSPEETISQKEVIEWLTGDRVAYTDRTRRFETKAGWCSGNVGMTGRSYLGTLQIAIATTGVKGLKTVVSEAAISSWYDYYREHGLVIAPSECQGEDMDKLAEVCQSNLWDGGNFTAKKAYEAEQAELLAAQDRATGQYSDFWESRNYRHHADGIKCSWISVHGLNDWNVKPKNVYKIWQKVKQLPVESHLFLHQGPHYNMNNLVSIDFTDLMNLWFVHELLEVENGAYEQWPKVMIQDNLEADKWHAESDWANDLGQASLYSPTADGYLSTVENGTGQLTFTDLGGTEFKKAGISETDWEYQFISGEKKWAKASLRFESEEFLHPTTLVGRPKVQVRVAANKTVGQLSVALVDLGTRQRLTATPKIFARGNQPFGYRFEADSLQEFVPDKATKAKLITKAHMNLQNYQDMKQPSKLEAGQFVDLEFELQPTYYTLPAGAKLCLIIYSTDQGMTKRPLETEDYTVDLAGTALLLYRK.

Active-site charge relay system residues include Ser-363, Asp-482, and His-513.

This sequence belongs to the peptidase S15 family. As to quaternary structure, homodimer.

The protein resides in the cytoplasm. The enzyme catalyses Hydrolyzes Xaa-Pro-|- bonds to release unblocked, N-terminal dipeptides from substrates including Ala-Pro-|-p-nitroanilide and (sequentially) Tyr-Pro-|-Phe-Pro-|-Gly-Pro-|-Ile.. Removes N-terminal dipeptides sequentially from polypeptides having unsubstituted N-termini provided that the penultimate residue is proline. The sequence is that of Xaa-Pro dipeptidyl-peptidase from Lactobacillus delbrueckii subsp. bulgaricus (strain ATCC 11842 / DSM 20081 / BCRC 10696 / JCM 1002 / NBRC 13953 / NCIMB 11778 / NCTC 12712 / WDCM 00102 / Lb 14).